A 155-amino-acid chain; its full sequence is Protein phosphatase 1 regulatory subunit 17 (155 aa).

The tract at residues 41–73 (KKKPRKGKNVQATLNVESDQKKPRRKDTPALHI) is disordered. Basic and acidic residues predominate over residues 58–69 (SDQKKPRRKDTP). A phosphothreonine; by PKG/PRKG1 mark is found at Thr68 and Thr119.

In terms of processing, substrate for cGMP-dependent protein kinase. Phosphorylated by PRKG1 isoform alpha. Phosphorylation of Thr-68 and Thr-119 is required for its phosphatase activity. Substrate for cGMP-dependent protein kinase. As to expression, highly expressed in cerebellum.

Functionally, inhibits phosphatase activities of protein phosphatase 1 (PP1) and protein phosphatase 2A (PP2A) complexes. The chain is Protein phosphatase 1 regulatory subunit 17 (PPP1R17) from Homo sapiens (Human).